The sequence spans 423 residues: Endochitinase 1 (423 aa).

The signal sequence occupies residues 1–22 (MPSLFAQSLAIIATLQATLGLA). A GH18 domain is found at 39 to 401 (YVNAVYFTNW…GTSSNKLGGP (363 aa)). N-linked (GlcNAc...) asparagine glycosylation is found at asparagine 74, asparagine 78, and asparagine 96. Chitin-binding positions include 103-104 (GT) and 130-133 (GGWT). Glutamate 172 functions as the Proton donor in the catalytic mechanism. Chitin-binding positions include tyrosine 173 and 238-241 (MAYD). Asparagine 248 carries an N-linked (GlcNAc...) asparagine glycan. Chitin is bound at residue tryptophan 378. The disordered stretch occupies residues 380 to 423 (ASSDRSGSQSLIGTSSNKLGGPDSTENLLNYPDSKYDNMRKQMA). Over residues 383-407 (DRSGSQSLIGTSSNKLGGPDSTENL) the composition is skewed to polar residues. Basic and acidic residues predominate over residues 413–423 (SKYDNMRKQMA).

It belongs to the glycosyl hydrolase 18 family. Chitinase class V subfamily.

It is found in the secreted. The catalysed reaction is Random endo-hydrolysis of N-acetyl-beta-D-glucosaminide (1-&gt;4)-beta-linkages in chitin and chitodextrins.. Functionally, secreted chitinase involved in the degradation of chitin, a component of the cell walls of fungi and exoskeletal elements of some animals (including worms and arthropods). Participates in the infection process and directly acts in the penetration process of the host cuticle. The sequence is that of Endochitinase 1 (chit1) from Metarhizium anisopliae (Entomophthora anisopliae).